Consider the following 844-residue polypeptide: DNA mismatch repair protein MutS (844 aa).

602–609 provides a ligand contact to ATP; it reads GPNMSGKS.

This sequence belongs to the DNA mismatch repair MutS family.

Its function is as follows. This protein is involved in the repair of mismatches in DNA. It is possible that it carries out the mismatch recognition step. This protein has a weak ATPase activity. In Streptococcus pneumoniae serotype 19F (strain G54), this protein is DNA mismatch repair protein MutS.